The sequence spans 81 residues: Cytotoxin 1b (81 aa).

The first 21 residues, M1 to T21, serve as a signal peptide directing secretion. Cystine bridges form between C24/C42, C35/C59, C63/C74, and C75/C80.

This sequence belongs to the three-finger toxin family. Short-chain subfamily. Type IA cytotoxin sub-subfamily. As to quaternary structure, monomer in solution; Homodimer and oligomer in the presence of negatively charged lipids forming a pore with a size ranging between 20 and 30 Angstroms. As to expression, expressed by the venom gland.

The protein resides in the secreted. It is found in the target cell membrane. Its function is as follows. Shows cytolytic activity on many different cells by forming pore in lipid membranes. In vivo, increases heart rate or kills the animal by cardiac arrest. In addition, it binds to heparin with high affinity, interacts with Kv channel-interacting protein 1 (KCNIP1) in a calcium-independent manner, and binds to integrin alpha-V/beta-3 (ITGAV/ITGB3) with moderate affinity. In Naja atra (Chinese cobra), this protein is Cytotoxin 1b.